The primary structure comprises 112 residues: UPF0102 protein THEYE_A1950 (112 aa).

The protein belongs to the UPF0102 family.

This chain is UPF0102 protein THEYE_A1950, found in Thermodesulfovibrio yellowstonii (strain ATCC 51303 / DSM 11347 / YP87).